The sequence spans 281 residues: MEEMSLLNHSGGPVTRSRIKHDLADLGLKDGDVVIFHTRMSAIGYVAGGTQTIIGALLDVVGARGTLMVPCGWNNAPPYDFLDWPRDWQDALRAEHPAYDPDLSEADYNNGRLPEALPRWPGAIRSRHPDASFAALGPAAAELMAEHPWDHPHGPDTPLARLIAHSGRVLLLGAPLDTMTLLHHAEALADVRSKRFVTYEQPILVNGQRVWRQFRDIDSEEGAFDYSTVRRGVEPFEAIARDMLSAGIGRQGRVGAADSYLFDAGPVFNFAINWIEAKLKR.

It belongs to the antibiotic N-acetyltransferase family.

The enzyme catalyses a 2-deoxystreptamine antibiotic + acetyl-CoA = an N(3)-acetyl-2-deoxystreptamine antibiotic + CoA + H(+). Resistance to neomycin. In Micromonospora chalcea, this protein is Aminoglycoside N(3)-acetyltransferase IX (aacC9).